A 45-amino-acid chain; its full sequence is Large ribosomal subunit protein bL34 (45 aa).

Residues 1-45 (MTKRTFGGTSRKRKRVSGFRVRMRSHTGRRVIKSRRKRGRDRIAV) form a disordered region. The span at 10-45 (SRKRKRVSGFRVRMRSHTGRRVIKSRRKRGRDRIAV) shows a compositional bias: basic residues.

It belongs to the bacterial ribosomal protein bL34 family.

The sequence is that of Large ribosomal subunit protein bL34 from Prochlorococcus marinus (strain MIT 9515).